A 356-amino-acid chain; its full sequence is tRNA N6-adenosine threonylcarbamoyltransferase (356 aa).

2 residues coordinate Fe cation: His115 and His119. Substrate contacts are provided by residues 138 to 142 (LVSGG), Asp171, Gly184, and Asn283. Asp311 lines the Fe cation pocket.

It belongs to the KAE1 / TsaD family. Requires Fe(2+) as cofactor.

The protein localises to the cytoplasm. It carries out the reaction L-threonylcarbamoyladenylate + adenosine(37) in tRNA = N(6)-L-threonylcarbamoyladenosine(37) in tRNA + AMP + H(+). Functionally, required for the formation of a threonylcarbamoyl group on adenosine at position 37 (t(6)A37) in tRNAs that read codons beginning with adenine. Is involved in the transfer of the threonylcarbamoyl moiety of threonylcarbamoyl-AMP (TC-AMP) to the N6 group of A37, together with TsaE and TsaB. TsaD likely plays a direct catalytic role in this reaction. The sequence is that of tRNA N6-adenosine threonylcarbamoyltransferase from Prochlorococcus marinus (strain AS9601).